Here is a 99-residue protein sequence, read N- to C-terminus: Nucleoid-associated protein LACR_0106 (99 aa).

Belongs to the YbaB/EbfC family. In terms of assembly, homodimer.

Its subcellular location is the cytoplasm. The protein localises to the nucleoid. In terms of biological role, binds to DNA and alters its conformation. May be involved in regulation of gene expression, nucleoid organization and DNA protection. This chain is Nucleoid-associated protein LACR_0106, found in Lactococcus lactis subsp. cremoris (strain SK11).